The sequence spans 115 residues: Migration and invasion enhancer 1 (115 aa).

Ser-2 is subject to N-acetylserine. Cys-30 and Cys-33 are disulfide-bonded. Cys-112 carries S-geranylgeranyl cysteine lipidation. Positions 113 to 115 are cleaved as a propeptide — removed in mature form; sequence VIL.

It belongs to the SelWTH family. Interacts with GPX1. Post-translationally, isoprenylation facilitates association with the plasma membrane and enhances the migratory phenotype of cells by inducing increased filopodia formation. In terms of tissue distribution, widely expressed with highest levels in kidney followed by brain and testis.

The protein resides in the cytoplasm. The protein localises to the cytosol. It localises to the cell membrane. Its function is as follows. Increases cell migration by inducing filopodia formation at the leading edge of migrating cells. Plays a role in regulation of apoptosis, possibly through control of CASP3. May be involved in a redox-related process. The chain is Migration and invasion enhancer 1 (Mien1) from Mus musculus (Mouse).